A 162-amino-acid polypeptide reads, in one-letter code: SsrA-binding protein (162 aa).

It belongs to the SmpB family.

It localises to the cytoplasm. In terms of biological role, required for rescue of stalled ribosomes mediated by trans-translation. Binds to transfer-messenger RNA (tmRNA), required for stable association of tmRNA with ribosomes. tmRNA and SmpB together mimic tRNA shape, replacing the anticodon stem-loop with SmpB. tmRNA is encoded by the ssrA gene; the 2 termini fold to resemble tRNA(Ala) and it encodes a 'tag peptide', a short internal open reading frame. During trans-translation Ala-aminoacylated tmRNA acts like a tRNA, entering the A-site of stalled ribosomes, displacing the stalled mRNA. The ribosome then switches to translate the ORF on the tmRNA; the nascent peptide is terminated with the 'tag peptide' encoded by the tmRNA and targeted for degradation. The ribosome is freed to recommence translation, which seems to be the essential function of trans-translation. This chain is SsrA-binding protein, found in Granulibacter bethesdensis (strain ATCC BAA-1260 / CGDNIH1).